Here is a 412-residue protein sequence, read N- to C-terminus: Polyferredoxin protein MvhB (412 aa).

4Fe-4S ferredoxin-type domains are found at residues 2–29 (IIVN…VTPE), 30–57 (DVIY…LEDL), 67–96 (GRIV…LDEG), 97–127 (KVKK…VEGI), 138–166 (EGPI…LDKV), 168–197 (GVIE…ISGR), 207–236 (KKFE…PRTS), 238–266 (LTVE…LEVE), 276–305 (EGLV…VVTK), 314–345 (EKVD…LVDM), 357–386 (KRVQ…LTDE), and 385–412 (DEKV…LSLK). [4Fe-4S] cluster-binding residues include Cys-9, Cys-12, Cys-15, and Cys-19. Residues Cys-76, Cys-79, Cys-82, Cys-86, Cys-107, Cys-110, Cys-113, Cys-117, Cys-146, Cys-149, Cys-152, Cys-156, Cys-177, Cys-180, Cys-183, Cys-187, Cys-216, Cys-219, Cys-222, Cys-226, Cys-246, Cys-249, Cys-252, and Cys-256 each coordinate [4Fe-4S] cluster. 12 residues coordinate [4Fe-4S] cluster: Cys-325, Cys-328, Cys-331, Cys-335, Cys-366, Cys-369, Cys-372, Cys-376, Cys-394, Cys-397, Cys-400, and Cys-404.

[4Fe-4S] cluster serves as cofactor.

In Methanothermobacter thermautotrophicus (strain ATCC 29096 / DSM 1053 / JCM 10044 / NBRC 100330 / Delta H) (Methanobacterium thermoautotrophicum), this protein is Polyferredoxin protein MvhB (mvhB).